The primary structure comprises 319 residues: Protein StrN (319 aa).

Its pathway is antibiotic biosynthesis; streptomycin biosynthesis. The polypeptide is Protein StrN (strN) (Streptomyces griseus).